Here is a 430-residue protein sequence, read N- to C-terminus: MNFVEELRWRGMVHDMMPGTEELLAKEQVTAYVGIDPTADSLHIGHLCGVMILRHFQRCGHKPLALIGGATGMIGDPSGKSAERNLLDEETLRHNQACIKKQLAKFLDFESDAPNRAELVNNYDWMKEFTFLDFAREVGKHITVNYMMAKESVKKRLNGEARDGLSFTEFTYQLLQGYDFLHLYETKGCKLQMGGSDQWGNITTGTELIRRTNGGEAYALTCPLITKADGGKFGKTESGNIWLDPRYTSPYKFYQFWLNVSDADAERYIKIFTSLDKAEIDGLVAEHNEAPHLRVLQKRLAKEVTVMVHSEEDYNAAVDASNILFGNATSDALKKLDEDTLLAVFEGVPQFEISRDALVEGVKAVDLFVDNAAVFASKGEMRKLVQGGGVSLNKEKLAAFDQVITTADLLDEKYLLVQRGKKNYYLIIAK.

Y32 provides a ligand contact to L-tyrosine. The short motif at 37 to 46 is the 'HIGH' region element; sequence PTADSLHIGH. The L-tyrosine site is built by Y172 and Q176. A 'KMSKS' region motif is present at residues 232–236; that stretch reads KFGKT. K235 serves as a coordination point for ATP. Residues 362-429 enclose the S4 RNA-binding domain; the sequence is VKAVDLFVDN…GKKNYYLIIA (68 aa).

Belongs to the class-I aminoacyl-tRNA synthetase family. TyrS type 1 subfamily. Homodimer.

The protein localises to the cytoplasm. It carries out the reaction tRNA(Tyr) + L-tyrosine + ATP = L-tyrosyl-tRNA(Tyr) + AMP + diphosphate + H(+). Catalyzes the attachment of tyrosine to tRNA(Tyr) in a two-step reaction: tyrosine is first activated by ATP to form Tyr-AMP and then transferred to the acceptor end of tRNA(Tyr). This chain is Tyrosine--tRNA ligase, found in Bacteroides fragilis (strain YCH46).